The primary structure comprises 149 residues: UPF0102 protein Bpro_0391 (149 aa).

The tract at residues 1 to 30 (MWFSRKQVVKPPPDGSRAQPGQVTTKSRGD) is disordered.

The protein belongs to the UPF0102 family.

This Polaromonas sp. (strain JS666 / ATCC BAA-500) protein is UPF0102 protein Bpro_0391.